A 45-amino-acid polypeptide reads, in one-letter code: uncharacterized protein (45 aa).

The interval 18–45 (RRGRIGVQPSPERRSEVVGPFPLARSLS) is disordered.

This is an uncharacterized protein from Homo sapiens (Human).